Reading from the N-terminus, the 126-residue chain is Histone H2B type 1-J (126 aa).

Residues 1 to 12 (MPEPAKSAPAPK) are compositionally biased toward low complexity. Positions 1-35 (MPEPAKSAPAPKKGSKKAVTKAQKKDGKKRKRSRK) are disordered. P2 bears the N-acetylproline mark. E3 bears the ADP-ribosyl glutamic acid mark. An N6-(2-hydroxyisobutyryl)lysine; alternate modification is found at K6. K6 carries the N6-(beta-hydroxybutyryl)lysine; alternate modification. Position 6 is an N6-acetyllysine; alternate (K6). N6-butyryllysine; alternate is present on K6. K6 is modified (N6-crotonyllysine; alternate). N6-lactoyllysine; alternate is present on K6. Residue K6 forms a Glycyl lysine isopeptide (Lys-Gly) (interchain with G-Cter in SUMO2); alternate linkage. S7 is modified (ADP-ribosylserine). K12 bears the N6-(beta-hydroxybutyryl)lysine; alternate mark. N6-acetyllysine; alternate occurs at positions 12 and 13. K12 and K13 each carry N6-crotonyllysine; alternate. K12 carries the N6-lactoyllysine; alternate modification. The residue at position 13 (K13) is an N6-(2-hydroxyisobutyryl)lysine; alternate. The residue at position 15 (S15) is a Phosphoserine; by STK4/MST1. N6-acetyllysine; alternate occurs at positions 16, 17, 21, and 24. 4 positions are modified to N6-crotonyllysine; alternate: K16, K17, K21, and K24. An N6-lactoyllysine; alternate mark is found at K16, K17, K21, and K24. An N6-(beta-hydroxybutyryl)lysine; alternate mark is found at K17 and K21. Residue K17 is modified to N6-glutaryllysine; alternate. 2 positions are modified to N6-(2-hydroxyisobutyryl)lysine; alternate: K21 and K24. The residue at position 21 (K21) is an N6-butyryllysine; alternate. K21 participates in a covalent cross-link: Glycyl lysine isopeptide (Lys-Gly) (interchain with G-Cter in SUMO2); alternate. The residue at position 25 (K25) is an N6-(2-hydroxyisobutyryl)lysine. K35 carries the N6-(2-hydroxyisobutyryl)lysine; alternate modification. K35 bears the N6-(beta-hydroxybutyryl)lysine; alternate mark. K35 carries the N6-crotonyllysine; alternate modification. K35 carries the N6-glutaryllysine; alternate modification. K35 is modified (N6-succinyllysine; alternate). K35 is covalently cross-linked (Glycyl lysine isopeptide (Lys-Gly) (interchain with G-Cter in ubiquitin); alternate). The residue at position 36 (E36) is a PolyADP-ribosyl glutamic acid. S37 is modified (phosphoserine; by AMPK). K44, K47, and K58 each carry N6-(2-hydroxyisobutyryl)lysine; alternate. At K44 the chain carries N6-lactoyllysine; alternate. 2 positions are modified to N6-glutaryllysine; alternate: K44 and K47. K47 carries the N6-methyllysine; alternate modification. K58 bears the N6,N6-dimethyllysine; alternate mark. At R80 the chain carries Dimethylated arginine. At K86 the chain carries N6-(2-hydroxyisobutyryl)lysine; alternate. K86 bears the N6-(beta-hydroxybutyryl)lysine; alternate mark. Residue K86 is modified to N6-acetyllysine; alternate. K86 is subject to N6-lactoyllysine; alternate. K86 is subject to N6,N6,N6-trimethyllysine; alternate. An omega-N-methylarginine mark is found at R87 and R93. K109 is modified (N6-(2-hydroxyisobutyryl)lysine; alternate). K109 carries the post-translational modification N6-lactoyllysine; alternate. K109 is modified (N6-glutaryllysine; alternate). An N6-methyllysine; alternate modification is found at K109. O-linked (GlcNAc) serine glycosylation is present at S113. T116 carries the phosphothreonine modification. An N6-(2-hydroxyisobutyryl)lysine; alternate mark is found at K117 and K121. 2 positions are modified to N6-(beta-hydroxybutyryl)lysine; alternate: K117 and K121. 2 positions are modified to N6-lactoyllysine; alternate: K117 and K121. An N6-glutaryllysine; alternate mark is found at K117 and K121. N6-succinyllysine; alternate occurs at positions 117 and 121. At K117 the chain carries N6-malonyllysine; alternate. K117 carries the N6-methylated lysine; alternate modification. K121 is covalently cross-linked (Glycyl lysine isopeptide (Lys-Gly) (interchain with G-Cter in ubiquitin); alternate).

The protein belongs to the histone H2B family. The nucleosome is a histone octamer containing two molecules each of H2A, H2B, H3 and H4 assembled in one H3-H4 heterotetramer and two H2A-H2B heterodimers. The octamer wraps approximately 147 bp of DNA. Heterodimer H2BC11 and H2AZ1 interacts with VPS72 (via N-terminal domain). Post-translationally, monoubiquitination at Lys-35 (H2BK34Ub) by the MSL1/MSL2 dimer is required for histone H3 'Lys-4' (H3K4me) and 'Lys-79' (H3K79me) methylation and transcription activation at specific gene loci, such as HOXA9 and MEIS1 loci. Similarly, monoubiquitination at Lys-121 (H2BK120Ub) by the RNF20/40 complex gives a specific tag for epigenetic transcriptional activation and is also prerequisite for histone H3 'Lys-4' and 'Lys-79' methylation. It also functions cooperatively with the FACT dimer to stimulate elongation by RNA polymerase II. H2BK120Ub also acts as a regulator of mRNA splicing: deubiquitination by USP49 is required for efficient cotranscriptional splicing of a large set of exons. In terms of processing, phosphorylation at Ser-37 (H2BS36ph) by AMPK in response to stress promotes transcription. Phosphorylated on Ser-15 (H2BS14ph) by STK4/MST1 during apoptosis; which facilitates apoptotic chromatin condensation. Also phosphorylated on Ser-15 in response to DNA double strand breaks (DSBs), and in correlation with somatic hypermutation and immunoglobulin class-switch recombination. GlcNAcylation at Ser-113 promotes monoubiquitination of Lys-121. It fluctuates in response to extracellular glucose, and associates with transcribed genes. Post-translationally, ADP-ribosylated by PARP1 or PARP2 on Ser-7 (H2BS6ADPr) in response to DNA damage. H2BS6ADPr promotes recruitment of CHD1L. Mono-ADP-ribosylated on Glu-3 (H2BE2ADPr) by PARP3 in response to single-strand breaks. Poly ADP-ribosylation on Glu-36 (H2BE35ADPr) by PARP1 regulates adipogenesis: it inhibits phosphorylation at Ser-37 (H2BS36ph), thereby blocking expression of pro-adipogenetic genes. In terms of processing, crotonylation (Kcr) is specifically present in male germ cells and marks testis-specific genes in post-meiotic cells, including X-linked genes that escape sex chromosome inactivation in haploid cells. Crotonylation marks active promoters and enhancers and confers resistance to transcriptional repressors. It is also associated with post-meiotically activated genes on autosomes. Lactylated in macrophages by EP300/P300 by using lactoyl-CoA directly derived from endogenous or exogenous lactate, leading to stimulates gene transcription.

The protein localises to the nucleus. Its subcellular location is the chromosome. In terms of biological role, core component of nucleosome. Nucleosomes wrap and compact DNA into chromatin, limiting DNA accessibility to the cellular machineries which require DNA as a template. Histones thereby play a central role in transcription regulation, DNA repair, DNA replication and chromosomal stability. DNA accessibility is regulated via a complex set of post-translational modifications of histones, also called histone code, and nucleosome remodeling. Has broad antibacterial activity. May contribute to the formation of the functional antimicrobial barrier of the colonic epithelium, and to the bactericidal activity of amniotic fluid. The polypeptide is Histone H2B type 1-J (Homo sapiens (Human)).